Reading from the N-terminus, the 1064-residue chain is Ribosome quality control complex subunit NEMF (1064 aa).

A Phosphothreonine modification is found at Thr-7. Positions 296 to 359 form a coiled coil; the sequence is VDEFYSKIEG…LIEMNLQIVD (64 aa). Ser-417 bears the Phosphoserine mark. Residues 420–451 form a disordered region; the sequence is EDGDGDASIENSDAEAPKGKKKKQKNKQLQKP. The segment covering 438 to 447 has biased composition (basic residues); that stretch reads GKKKKQKNKQ. Positions 481–512 form a coiled coil; sequence AAKKTQRTVEAAEKAFKSAEKKTKQTLKEVQT. Over residues 694–707 the composition is skewed to acidic residues; the sequence is EQLEGGDSSEEETE. Disordered regions lie at residues 694-718 and 731-973; these read EQLE…DVEL and SGRD…SLTG. The span at 731–756 shows a compositional bias: basic and acidic residues; the sequence is SGRDELSSEDGEAKAVTKDQEPIGEM. Ser-737 carries the phosphoserine modification. The span at 771 to 781 shows a compositional bias: polar residues; the sequence is IDLSHLQSQRP. Residues 828–839 show a composition bias toward basic and acidic residues; the sequence is IEEKDKERESAV. A coiled-coil region spans residues 858-882; that stretch reads KRGQKSKMKKMKEKYKDQDDEDREL. The segment covering 859–870 has biased composition (basic residues); it reads RGQKSKMKKMKE. Residues 947-959 show a composition bias toward basic and acidic residues; the sequence is DDPHDDKEEHDLD. The segment covering 960 to 973 has biased composition (polar residues); that stretch reads QQGNEENLFDSLTG.

This sequence belongs to the NEMF family. In terms of assembly, component of the ribosome quality control complex (RQC), composed of the E3 ubiquitin ligase LTN1, TCF25 and NEMF associated with the 60S ribosomal subunit. The complex probably also contains VCP/p97 and its ubiquitin-binding cofactors. Interacts (via its N-terminus) with XPO1.

Its subcellular location is the cytoplasm. It is found in the cytosol. The protein resides in the nucleus. Key component of the ribosome quality control complex (RQC), a ribosome-associated complex that mediates the extraction of incompletely synthesized nascent chains from stalled ribosomes as well as their ubiquitin-mediated proteasomal degradation. Thereby, frees 60S subunit ribosomes from the stalled translation complex and prevents the accumulation of nascent polypeptide chains that are potentially toxic for the cell. Within the RQC complex, NEMF specifically binds stalled 60S ribosomal subunits by recognizing an exposed, nascent chain-conjugated tRNA moiety and promotes the recruitment of LTN1 to stalled 60S subunits. Following binding to stalled 60S ribosomal subunits, NEMF mediates CAT tailing by recruiting alanine-charged tRNA to the A-site and directing the elongation of stalled nascent chains independently of mRNA or 40S subunits, leading to non-templated C-terminal alanine extensions (CAT tails). Mainly recruits alanine-charged tRNAs, but can also other amino acid-charged tRNAs. CAT tailing is required to promote ubiquitination of stalled nascent chains by different E3 ubiquitin-protein ligases. In the canonical RQC pathway (RQC-L), CAT tailing facilitates LTN1-dependent ubiquitination by exposing lysine residues that would otherwise remain buried in the ribosomal exit tunnel. In the alternative RQC pathway (RQC-C) CAT tailing creates an C-degron mainly composed of alanine that is recognized by the CRL2(KLHDC10) and RCHY1/PIRH2 E3 ligases, leading to ubiquitination and degradation of stalled nascent chains. NEMF may also indirectly play a role in nuclear export. This is Ribosome quality control complex subunit NEMF from Mus musculus (Mouse).